A 398-amino-acid polypeptide reads, in one-letter code: Succinate--CoA ligase [ADP-forming] subunit beta (398 aa).

An ATP-grasp domain is found at 9–254 (KALLKSYGAP…TTEEDEKEIE (246 aa)). ATP is bound by residues lysine 46, 53-55 (GRG), glutamate 109, alanine 112, and glutamate 117. Residues asparagine 209 and aspartate 223 each coordinate Mg(2+). Residues asparagine 274 and 331–333 (GIM) contribute to the substrate site.

The protein belongs to the succinate/malate CoA ligase beta subunit family. Heterotetramer of two alpha and two beta subunits. It depends on Mg(2+) as a cofactor.

The catalysed reaction is succinate + ATP + CoA = succinyl-CoA + ADP + phosphate. The enzyme catalyses GTP + succinate + CoA = succinyl-CoA + GDP + phosphate. It participates in carbohydrate metabolism; tricarboxylic acid cycle; succinate from succinyl-CoA (ligase route): step 1/1. In terms of biological role, succinyl-CoA synthetase functions in the citric acid cycle (TCA), coupling the hydrolysis of succinyl-CoA to the synthesis of either ATP or GTP and thus represents the only step of substrate-level phosphorylation in the TCA. The beta subunit provides nucleotide specificity of the enzyme and binds the substrate succinate, while the binding sites for coenzyme A and phosphate are found in the alpha subunit. This Sinorhizobium medicae (strain WSM419) (Ensifer medicae) protein is Succinate--CoA ligase [ADP-forming] subunit beta.